Consider the following 371-residue polypeptide: MPHQQMLILFGLLPVATNISTWWNFGSMLLTCSALQVMTGFFLSMHYTANINLAFSSIIHITRDVPHGWMMQNLHAIGASMFFICIYMHIARGLYYGSYLNKETWLSGTTLLIMLMATAFFGYVLPWGQMSFWAATVITNLLTAVPYLGTTMTTWLWGGFAINDPTLTRFFALHFILPFGIISMSSVHIMLLHEDGSANPLGTNSDIDKIPFHPYHTYKDLLVISMMIITVLLTVSFFPDIMNDPENFSKANPLVTPQHIKPEWYFLFAYGILRSIPNKLGGALALVMSIMILLTMPFTHTSTLRSMTFRPLMQFMFWTLVATFTVITWTATKPVEPPFTTISQVASIIYFMFFMSNPILGWMENKITKHN.

The next 4 helical transmembrane spans lie at 25–45 (FGSM…FLSM), 69–90 (WMMQ…YMHI), 105–125 (WLSG…GYVL), and 170–190 (FFAL…VHIM). Heme b is bound by residues His75 and His89. Residues His174 and His188 each contribute to the heme b site. Residue His193 coordinates a ubiquinone. Transmembrane regions (helical) follow at residues 218-238 (YKDL…VSFF), 280-300 (LGGA…PFTH), 312-332 (LMQF…WTAT), and 339-358 (FTTI…MSNP).

This sequence belongs to the cytochrome b family. In terms of assembly, the cytochrome bc1 complex contains 3 respiratory subunits (MT-CYB, CYC1 and UQCRFS1), 2 core proteins (UQCRC1 and UQCRC2) and probably 6 low-molecular weight proteins. The cofactor is heme b.

The protein resides in the mitochondrion inner membrane. In terms of biological role, component of the ubiquinol-cytochrome c reductase complex (complex III or cytochrome b-c1 complex) that is part of the mitochondrial respiratory chain. The b-c1 complex mediates electron transfer from ubiquinol to cytochrome c. Contributes to the generation of a proton gradient across the mitochondrial membrane that is then used for ATP synthesis. The protein is Cytochrome b (MT-CYB) of Candoia carinata (Papuan tree boa).